The following is a 244-amino-acid chain: Cell division protein ZapD (244 aa).

Belongs to the ZapD family. In terms of assembly, interacts with FtsZ.

The protein resides in the cytoplasm. In terms of biological role, cell division factor that enhances FtsZ-ring assembly. Directly interacts with FtsZ and promotes bundling of FtsZ protofilaments, with a reduction in FtsZ GTPase activity. The protein is Cell division protein ZapD of Shewanella sp. (strain MR-4).